The sequence spans 390 residues: Lipid-A-disaccharide synthase (390 aa).

The protein belongs to the LpxB family.

It catalyses the reaction a lipid X + a UDP-2-N,3-O-bis[(3R)-3-hydroxyacyl]-alpha-D-glucosamine = a lipid A disaccharide + UDP + H(+). It participates in bacterial outer membrane biogenesis; LPS lipid A biosynthesis. In terms of biological role, condensation of UDP-2,3-diacylglucosamine and 2,3-diacylglucosamine-1-phosphate to form lipid A disaccharide, a precursor of lipid A, a phosphorylated glycolipid that anchors the lipopolysaccharide to the outer membrane of the cell. This Neisseria gonorrhoeae (strain ATCC 700825 / FA 1090) protein is Lipid-A-disaccharide synthase.